The primary structure comprises 306 residues: Palmitoyl-protein thioesterase 1 (306 aa).

Positions 1-27 (MASSSCLWLLALAFLLGSCASLALGHL) are cleaved as a signal peptide. 3 disulfides stabilise this stretch: Cys45–Cys46, Cys96–Cys128, and Cys152–Cys160. Ser115 is a catalytic residue. Asn197, Asn212, and Asn232 each carry an N-linked (GlcNAc...) asparagine glycan. Active-site residues include Asp233 and His289.

This sequence belongs to the palmitoyl-protein thioesterase family. As to quaternary structure, interacts with CLN5, ATP5F1A and ATP5F1B. In terms of processing, glycosylated. In terms of tissue distribution, spleen, brain, seminal vesicle, and testis. Lower levels of activity in liver, heart, lung, and skeletal muscle.

The protein localises to the lysosome. It is found in the secreted. The protein resides in the golgi apparatus. Its subcellular location is the endoplasmic reticulum. The catalysed reaction is S-hexadecanoyl-L-cysteinyl-[protein] + H2O = L-cysteinyl-[protein] + hexadecanoate + H(+). It carries out the reaction hexadecanoyl-CoA + H2O = hexadecanoate + CoA + H(+). The enzyme catalyses S-hexadecanoyl-N-acetylcysteamine + H2O = N-acetylcysteamine + hexadecanoate + H(+). It catalyses the reaction S-hexadecanoyl-N-acetylcysteine methyl ester + H2O = N-acetylcysteine methyl ester + hexadecanoate + H(+). Its activity is regulated as follows. Palmitoylation reduces PPT1 enzymatic activity. Its function is as follows. Has thioesterase activity against fatty acid thioesters with 14 -18 carbons, including palmitoyl-CoA, S-palmitoyl-N-acetylcysteamine, and palmitoylated proteins. In contrast to PPT2, PPT1 can hydrolyze palmitoylated proteins and palmitoylcysteine. This Bos taurus (Bovine) protein is Palmitoyl-protein thioesterase 1 (PPT1).